The chain runs to 242 residues: Endoplasmic reticulum membrane protein complex subunit 7 (242 aa).

The signal sequence occupies residues 1–23 (MAAALWGFFPVLLLLLLSGDVQS). The Lumenal portion of the chain corresponds to 24-159 (SEVPGAAAEG…IKRESWGWTD (136 aa)). A helical membrane pass occupies residues 160–180 (FLMNPMVMMMVLPLLIFVLLP). Residues 181 to 242 (KVVNTSDPDM…TGKSGAGKRR (62 aa)) lie on the Cytoplasmic side of the membrane. The tract at residues 217–242 (LFSSKSSGKSSSGSSKTGKSGAGKRR) is disordered. The segment covering 219–235 (SSKSSGKSSSGSSKTGK) has biased composition (low complexity).

The protein belongs to the EMC7 family. Component of the ER membrane protein complex (EMC).

Its subcellular location is the endoplasmic reticulum membrane. In terms of biological role, part of the endoplasmic reticulum membrane protein complex (EMC) that enables the energy-independent insertion into endoplasmic reticulum membranes of newly synthesized membrane proteins. Preferentially accommodates proteins with transmembrane domains that are weakly hydrophobic or contain destabilizing features such as charged and aromatic residues. Involved in the cotranslational insertion of multi-pass membrane proteins in which stop-transfer membrane-anchor sequences become ER membrane spanning helices. It is also required for the post-translational insertion of tail-anchored/TA proteins in endoplasmic reticulum membranes. By mediating the proper cotranslational insertion of N-terminal transmembrane domains in an N-exo topology, with translocated N-terminus in the lumen of the ER, controls the topology of multi-pass membrane proteins like the G protein-coupled receptors. By regulating the insertion of various proteins in membranes, it is indirectly involved in many cellular processes. The protein is Endoplasmic reticulum membrane protein complex subunit 7 (EMC7) of Homo sapiens (Human).